Reading from the N-terminus, the 137-residue chain is Bet1-like protein At4g14600 (137 aa).

Residues 1-113 (MASNPHRSGA…MSIIRSGNNH (113 aa)) lie on the Cytoplasmic side of the membrane. Positions 43 to 105 (DPMHSDLDDE…KNNIRKLNMS (63 aa)) constitute a t-SNARE coiled-coil homology domain. A helical; Anchor for type IV membrane protein membrane pass occupies residues 114 to 134 (IMHVVLFALLVFFVLYIWSKM). Topologically, residues 135–137 (FKR) are vesicular.

The protein belongs to the BET1 family.

The protein resides in the golgi apparatus membrane. The protein localises to the endoplasmic reticulum membrane. Functionally, required for vesicular transport from the ER to the Golgi complex. Functions as a SNARE associated with ER-derived vesicles. In Arabidopsis thaliana (Mouse-ear cress), this protein is Bet1-like protein At4g14600.